The primary structure comprises 682 residues: Potassium-transporting ATPase ATP-binding subunit (682 aa).

The next 4 membrane-spanning stretches (helical) occupy residues 34-54, 62-82, 219-239, and 254-274; these read PVMFIVWIGSLLTTCISIAMA, ALFSAAISGWLWITVLFANFA, IALTILLIALTIVFLLATATL, and VLVALLVCLIPTTIGGLLSAI. The 4-aspartylphosphate intermediate role is filled by aspartate 307. Residues aspartate 344, glutamate 348, 377-384, and lysine 395 each bind ATP; that span reads FTAQSRMS. Mg(2+)-binding residues include aspartate 518 and aspartate 522. 3 consecutive transmembrane segments (helical) span residues 588 to 608, 616 to 636, and 656 to 676; these read FAIIPAAFAATYPQLNALNIM, AILSAVIFNALIIVFLIPLAL, and IYGLGGLLVPFIGIKVIDLLL.

This sequence belongs to the cation transport ATPase (P-type) (TC 3.A.3) family. Type IA subfamily. In terms of assembly, the system is composed of three essential subunits: KdpA, KdpB and KdpC.

It localises to the cell inner membrane. It carries out the reaction K(+)(out) + ATP + H2O = K(+)(in) + ADP + phosphate + H(+). Its function is as follows. Part of the high-affinity ATP-driven potassium transport (or Kdp) system, which catalyzes the hydrolysis of ATP coupled with the electrogenic transport of potassium into the cytoplasm. This subunit is responsible for energy coupling to the transport system and for the release of the potassium ions to the cytoplasm. The sequence is that of Potassium-transporting ATPase ATP-binding subunit from Escherichia coli (strain ATCC 8739 / DSM 1576 / NBRC 3972 / NCIMB 8545 / WDCM 00012 / Crooks).